The chain runs to 372 residues: Aminomethyltransferase (372 aa).

This sequence belongs to the GcvT family. In terms of assembly, the glycine cleavage system is composed of four proteins: P, T, L and H.

It catalyses the reaction N(6)-[(R)-S(8)-aminomethyldihydrolipoyl]-L-lysyl-[protein] + (6S)-5,6,7,8-tetrahydrofolate = N(6)-[(R)-dihydrolipoyl]-L-lysyl-[protein] + (6R)-5,10-methylene-5,6,7,8-tetrahydrofolate + NH4(+). The glycine cleavage system catalyzes the degradation of glycine. The polypeptide is Aminomethyltransferase (Burkholderia ambifaria (strain MC40-6)).